The chain runs to 346 residues: MELAPVNLSEGNGSDPEPPAEPRPLFGIGVENFITLVVFGLIFAMGVLGNSLVITVLARSKPGKPRSTTNLFILNLSIADLAYLLFCIPFQATVYALPTWVLGAFICKFIHYFFTVSMLVSIFTLAAMSVDRYVAIVHSRRSSSLRVSRNALLGVGFIWALSIAMASPVAYYQRLFHRDSNQTFCWEHWPNQLHKKAYVVCTFVFGYLLPLLLICFCYAKVLNHLHKKLKNMSKKSEASKKKTAQTVLVVVVVFGISWLPHHVIHLWAEFGAFPLTPASFFFRITAHCLAYSNSSVNPIIYAFLSENFRKAYKQVFKCRVCNESPHGDAKEKNRIDTPPSTNCTHV.

At 1 to 33 (MELAPVNLSEGNGSDPEPPAEPRPLFGIGVENF) the chain is on the extracellular side. 2 N-linked (GlcNAc...) asparagine glycosylation sites follow: Asn7 and Asn12. Residues 34–54 (ITLVVFGLIFAMGVLGNSLVI) form a helical membrane-spanning segment. Over 55–69 (TVLARSKPGKPRSTT) the chain is Cytoplasmic. The helical transmembrane segment at 70–90 (NLFILNLSIADLAYLLFCIPF) threads the bilayer. Residues 91–108 (QATVYALPTWVLGAFICK) are Extracellular-facing. An intrachain disulfide couples Cys107 to Cys185. The helical transmembrane segment at 109 to 130 (FIHYFFTVSMLVSIFTLAAMSV) threads the bilayer. Over 131–150 (DRYVAIVHSRRSSSLRVSRN) the chain is Cytoplasmic. Residues 151–171 (ALLGVGFIWALSIAMASPVAY) form a helical membrane-spanning segment. Residues 172–196 (YQRLFHRDSNQTFCWEHWPNQLHKK) lie on the Extracellular side of the membrane. Asn181 carries N-linked (GlcNAc...) asparagine glycosylation. A helical transmembrane segment spans residues 197 to 217 (AYVVCTFVFGYLLPLLLICFC). Residues 218-246 (YAKVLNHLHKKLKNMSKKSEASKKKTAQT) are Cytoplasmic-facing. Residues 247 to 267 (VLVVVVVFGISWLPHHVIHLW) traverse the membrane as a helical segment. At 268–269 (AE) the chain is on the extracellular side. Residues 270–290 (FGAFPLTPASFFFRITAHCLA) form a helical membrane-spanning segment. At 291–346 (YSNSSVNPIIYAFLSENFRKAYKQVFKCRVCNESPHGDAKEKNRIDTPPSTNCTHV) the chain is on the cytoplasmic side. Cys318 carries the S-palmitoyl cysteine lipid modification. Residues 326–335 (HGDAKEKNRI) show a composition bias toward basic and acidic residues. The segment at 326–346 (HGDAKEKNRIDTPPSTNCTHV) is disordered.

This sequence belongs to the G-protein coupled receptor 1 family. Interacts with GRP39 AND HTR1A. Three cysteine residues are found in the C-terminus, at least one of which may be palmitoylated. In terms of tissue distribution, spinal cord, small intestine, Rin14B insulinoma cells and several brain regions, particularly ventral hippocampus, amygdala, supraoptic nucleus, hypothalamus, thalamus, lateral parabrachial nucleus and locus coeruleus.

It localises to the cell membrane. In terms of biological role, receptor for the hormone galanin. The activity of this receptor is mediated by G proteins that inhibit adenylate cyclase activity. This Rattus norvegicus (Rat) protein is Galanin receptor type 1 (Galr1).